The chain runs to 311 residues: Methionyl-tRNA formyltransferase (311 aa).

(6S)-5,6,7,8-tetrahydrofolate is bound at residue 117–120; sequence SLLP.

Belongs to the Fmt family.

The enzyme catalyses L-methionyl-tRNA(fMet) + (6R)-10-formyltetrahydrofolate = N-formyl-L-methionyl-tRNA(fMet) + (6S)-5,6,7,8-tetrahydrofolate + H(+). Functionally, attaches a formyl group to the free amino group of methionyl-tRNA(fMet). The formyl group appears to play a dual role in the initiator identity of N-formylmethionyl-tRNA by promoting its recognition by IF2 and preventing the misappropriation of this tRNA by the elongation apparatus. This is Methionyl-tRNA formyltransferase from Bordetella avium (strain 197N).